Reading from the N-terminus, the 197-residue chain is Guanylate kinase (197 aa).

The Guanylate kinase-like domain occupies Ser6–Ser191. An ATP-binding site is contributed by Gly13–Gly20.

This sequence belongs to the guanylate kinase family.

Its subcellular location is the cytoplasm. It carries out the reaction GMP + ATP = GDP + ADP. In terms of biological role, essential for recycling GMP and indirectly, cGMP. This Mesomycoplasma hyopneumoniae (strain 7448) (Mycoplasma hyopneumoniae) protein is Guanylate kinase.